Consider the following 104-residue polypeptide: Flagellar hook-basal body complex protein FliE (104 aa).

The protein belongs to the FliE family.

It localises to the bacterial flagellum basal body. In Escherichia coli O6:K15:H31 (strain 536 / UPEC), this protein is Flagellar hook-basal body complex protein FliE.